The primary structure comprises 306 residues: Protein YIPF1 (306 aa).

The Cytoplasmic segment spans residues 1 to 119 (MAAVDDLQFE…VRLYIRSNPD (119 aa)). Residues 14–62 (NAATSLTANPDATTVNIEDPGETPKHQSGSPRGSGREEDDELLGNDDSD) form a disordered region. Residues 15–29 (AATSLTANPDATTVN) are compositionally biased toward polar residues. Residues 50 to 59 (EEDDELLGND) show a composition bias toward acidic residues. A helical membrane pass occupies residues 120–140 (LYGPFWICATLVFAIAISGNL). The Lumenal segment spans residues 141-162 (SNFLIHLGEKTYRYVPEFRKVS). A helical transmembrane segment spans residues 163 to 183 (IAATTIYAYAWLVPLALWGFL). The Cytoplasmic portion of the chain corresponds to 184–200 (MWRNSKVMNIVSYSFLE). The helical transmembrane segment at 201-221 (IVCVYGYSLFIYIPTAILWII) threads the bilayer. At 222–227 (PQKAVR) the chain is on the lumenal side. Residues 228–248 (WILVMIALGISGSVLAMTFWP) traverse the membrane as a helical segment. Topologically, residues 249–256 (AVREDNRR) are cytoplasmic. The helical transmembrane segment at 257–277 (VALATIVTIVLLHMLLSVGCL) threads the bilayer. Over 278 to 306 (AYFFDAPEMDHLPTTTATPNQTVAAAKSS) the chain is Lumenal. A glycan (N-linked (GlcNAc...) asparagine) is linked at N297.

It belongs to the YIP1 family. As to quaternary structure, interacts with YIPF6; this interaction may stabilize YIPF1. May also form a ternary complex with YIPF2 and YIPF6.

Its subcellular location is the golgi apparatus. It localises to the cis-Golgi network membrane. It is found in the trans-Golgi network membrane. The protein localises to the late endosome membrane. This chain is Protein YIPF1 (YIPF1), found in Pongo abelii (Sumatran orangutan).